Consider the following 473-residue polypeptide: Psoralen synthase (473 aa).

Residues 1-17 traverse the membrane as a helical segment; sequence YFFPLFLVTIFLYKWLV. A substrate specificity region spans residues 350-355; that stretch reads TAPLLV. Cys425 contributes to the heme binding site.

This sequence belongs to the cytochrome P450 family. Heme is required as a cofactor.

It is found in the microsome membrane. It catalyses the reaction (7S)-marmesin + reduced [NADPH--hemoprotein reductase] + O2 = psoralen + acetone + oxidized [NADPH--hemoprotein reductase] + 2 H2O + H(+). It participates in secondary metabolite biosynthesis. Involved in the biosynthesis of coumarins and furanocoumarins (FCs), natural products required for defense responses against attacks by predators with potential medical and agroindustrial usages such as anticoagulant, rodenticide and artificial vanilla substitutes. Involved in linear furanocumarin (psoralen) biosynthesis. Converts marmesin to psoralen and, with much lower affinity, 5-hydroxymarmesin to bergaptol. The protein is Psoralen synthase of Pastinaca sativa (Wild parsnip).